A 432-amino-acid chain; its full sequence is Guanine/hypoxanthine permease PbuO (432 aa).

10 helical membrane-spanning segments follow: residues 15–35, 51–71, 92–112, 133–153, 174–194, 196–216, 234–254, 340–360, 379–399, and 412–432; these read IIAG…NPVI, IIAS…PIAI, GITY…FIIL, ITTG…GIVA, LVGL…ALFI, MAAT…KGFM, FGDV…LVTI, ALSG…SLMM, LVIL…LGFI, and REIH…LFIL.

Belongs to the nucleobase:cation symporter-2 (NCS2) (TC 2.A.40) family. Azg-like subfamily.

The protein resides in the cell membrane. In terms of biological role, involved in the uptake of the purine bases hypoxanthine and guanine. May work at purine concentrations higher than 100 uM. This chain is Guanine/hypoxanthine permease PbuO (pbuO), found in Bacillus subtilis (strain 168).